A 270-amino-acid polypeptide reads, in one-letter code: Putative phosphoenolpyruvate synthase regulatory protein (270 aa).

ADP is bound at residue 150–157; sequence GVSRCGKT.

Belongs to the pyruvate, phosphate/water dikinase regulatory protein family. PSRP subfamily.

It catalyses the reaction [pyruvate, water dikinase] + ADP = [pyruvate, water dikinase]-phosphate + AMP + H(+). The enzyme catalyses [pyruvate, water dikinase]-phosphate + phosphate + H(+) = [pyruvate, water dikinase] + diphosphate. In terms of biological role, bifunctional serine/threonine kinase and phosphorylase involved in the regulation of the phosphoenolpyruvate synthase (PEPS) by catalyzing its phosphorylation/dephosphorylation. The polypeptide is Putative phosphoenolpyruvate synthase regulatory protein (Shewanella sp. (strain ANA-3)).